Consider the following 86-residue polypeptide: U18-theraphotoxin-Cg1a (86 aa).

A signal peptide spans 1–20 (KASVLITLAVLGVMFVWTSA). The propeptide occupies 21-49 (AELEERGSDQRDSPALIKSMAKVFQSEER). 3 disulfides stabilise this stretch: Cys-51–Cys-65, Cys-58–Cys-70, and Cys-64–Cys-78. Phe-84 is modified (phenylalanine amide).

Belongs to the neurotoxin 10 (Hwtx-1) family. 47 subfamily. In terms of tissue distribution, expressed by the venom gland.

It localises to the secreted. Functionally, inhibits TTX-sensitive and TTX-insensitive sodium currents (IC(50) is 0.6 uM and 0.95 uM respectively) on rat dorsal root ganglion (DRG) neurons. Inhibits muscular subtypes sodium channels Nav1.4/SCN4A and Nav1.5/SCN5A transiently transfected in to HEK293 cells (IC(50) is 5.42 uM and 0.45 uM respectively). Also blocks Kv2.1/KCNB1 potassium channels expressed in X.laevis oocytes with an IC(50) of 604 nM. Injection of the toxin in mice was immediately followed by general ataxia, lack of response to stimuli and semiparalysis. This is U18-theraphotoxin-Cg1a from Chilobrachys guangxiensis (Chinese earth tiger tarantula).